A 103-amino-acid chain; its full sequence is Co-chaperonin GroES (103 aa).

It belongs to the GroES chaperonin family. As to quaternary structure, heptamer of 7 subunits arranged in a ring. Interacts with the chaperonin GroEL.

It localises to the cytoplasm. In terms of biological role, together with the chaperonin GroEL, plays an essential role in assisting protein folding. The GroEL-GroES system forms a nano-cage that allows encapsulation of the non-native substrate proteins and provides a physical environment optimized to promote and accelerate protein folding. GroES binds to the apical surface of the GroEL ring, thereby capping the opening of the GroEL channel. In Synechocystis sp. (strain ATCC 27184 / PCC 6803 / Kazusa), this protein is Co-chaperonin GroES.